The chain runs to 336 residues: Glucokinase (336 aa).

Position 12-17 (12-17) interacts with ATP; sequence ADIGGT.

Belongs to the bacterial glucokinase family.

The protein resides in the cytoplasm. It carries out the reaction D-glucose + ATP = D-glucose 6-phosphate + ADP + H(+). This chain is Glucokinase, found in Helicobacter pylori (strain ATCC 700392 / 26695) (Campylobacter pylori).